A 508-amino-acid chain; its full sequence is MGLPWYRVHTVVLNDPGRLLAVHIMHTALVSGWAGSMALYELAVFDPSDPVLDPMWRQGMFVIPFMTRLGITDSWGGWSISGGTVTNPGIWSYEGVAGTHIVFSGLCFLAAIWHWVYWDLEIFSDERTGKPSLDLPKIFGIHLFLAGVACFGFGAFHVTGLYGPGIWVSDPYGLTGKVQAVNPAWGAEGFDPFVPGGIASHHIAAGTLGILAGLFHLSVRPPQRLYKGLRMGNIETVLSSSIAAVFFAAFVVAGTMWYGSATTPIELFGPTRYQWDQGYFQQEIYRRVSNGLAENLSLSEAWSKIPEKLAFYDYIGNNPAKGGLFRAGSMDNGDGIAVGWLGHPVFRDKEGRELFVRRMPTFFETFPVVLVDEEGIVRADVPFRRAESKYSVEQVGVTVEFYGGELNGVSYSDPATVKKYARRSQLGEIFELDRATLKSDGVFRSSPRGWFTFGHATFALLFFFGHIWHGARTLFRDVFAGIDPDLDAQVEFGTFQKVGDPTTRKQAV.

6 helical membrane passes run 21 to 36 (AVHIMHTALVSGWAGS), 101 to 115 (IVFSGLCFLAAIWHW), 140 to 156 (GIHLFLAGVACFGFGAF), 203 to 218 (IAAGTLGILAGLFHLS), 237 to 252 (VLSSSIAAVFFAAFVV), and 457 to 472 (TFALLFFFGHIWHGAR).

The protein belongs to the PsbB/PsbC family. PsbB subfamily. As to quaternary structure, PSII is composed of 1 copy each of membrane proteins PsbA, PsbB, PsbC, PsbD, PsbE, PsbF, PsbH, PsbI, PsbJ, PsbK, PsbL, PsbM, PsbT, PsbX, PsbY, PsbZ, Psb30/Ycf12, at least 3 peripheral proteins of the oxygen-evolving complex and a large number of cofactors. It forms dimeric complexes. It depends on Binds multiple chlorophylls. PSII binds additional chlorophylls, carotenoids and specific lipids. as a cofactor.

It is found in the plastid. The protein resides in the chloroplast thylakoid membrane. In terms of biological role, one of the components of the core complex of photosystem II (PSII). It binds chlorophyll and helps catalyze the primary light-induced photochemical processes of PSII. PSII is a light-driven water:plastoquinone oxidoreductase, using light energy to abstract electrons from H(2)O, generating O(2) and a proton gradient subsequently used for ATP formation. The chain is Photosystem II CP47 reaction center protein from Secale cereale (Rye).